Consider the following 209-residue polypeptide: Thymidylate kinase (209 aa).

Residue Gly-13–Ser-20 participates in ATP binding.

Belongs to the thymidylate kinase family.

The enzyme catalyses dTMP + ATP = dTDP + ADP. In terms of biological role, phosphorylation of dTMP to form dTDP in both de novo and salvage pathways of dTTP synthesis. The polypeptide is Thymidylate kinase (Shewanella sp. (strain ANA-3)).